The primary structure comprises 149 residues: Large ribosomal subunit protein uL15C (149 aa).

Residues 21 to 40 (RIGKHRKQRGGRGNAGGQHH) form a disordered region.

The protein belongs to the universal ribosomal protein uL15 family. Component of the large ribosomal subunit.

Its subcellular location is the cytoplasm. The protein resides in the cytosol. The protein localises to the endoplasmic reticulum. Functionally, component of the large ribosomal subunit. The ribosome is a large ribonucleoprotein complex responsible for the synthesis of proteins in the cell. This Entamoeba histolytica (strain ATCC 30459 / HM-1:IMSS / ABRM) protein is Large ribosomal subunit protein uL15C (rpl27a-3).